The following is a 285-amino-acid chain: HTH-type transcriptional regulator MurR (285 aa).

In terms of domain architecture, HTH rpiR-type spans 1–77 (MLYLTKIRNA…MALIGEYSAS (77 aa)). The H-T-H motif DNA-binding region spans 37-56 (SRKMAKQLGISQSSIVKFAQ). Residues 128-268 (IIEVISKAPF…FVGLVQLNDV (141 aa)) form the SIS domain.

Homotetramer.

The protein operates within amino-sugar metabolism; N-acetylmuramate degradation [regulation]. In terms of biological role, represses the expression of the murPQ operon involved in the uptake and degradation of N-acetylmuramic acid (MurNAc). Binds to two adjacent inverted repeats within the operator region. MurNAc 6-phosphate, the substrate of MurQ, is the specific inducer that weakens binding of MurR to the operator. This Escherichia coli O9:H4 (strain HS) protein is HTH-type transcriptional regulator MurR.